Consider the following 230-residue polypeptide: Orotidine 5'-phosphate decarboxylase (230 aa).

Residues Asp-11, Lys-34, 61 to 70 (DLKLHDIPNT), Thr-117, Arg-179, Gln-188, Gly-208, and Arg-209 contribute to the substrate site. Lys-63 serves as the catalytic Proton donor.

Belongs to the OMP decarboxylase family. Type 1 subfamily. In terms of assembly, homodimer.

The catalysed reaction is orotidine 5'-phosphate + H(+) = UMP + CO2. The protein operates within pyrimidine metabolism; UMP biosynthesis via de novo pathway; UMP from orotate: step 2/2. In terms of biological role, catalyzes the decarboxylation of orotidine 5'-monophosphate (OMP) to uridine 5'-monophosphate (UMP). This is Orotidine 5'-phosphate decarboxylase from Streptococcus equi subsp. zooepidemicus (strain MGCS10565).